Here is a 215-residue protein sequence, read N- to C-terminus: UPF0502 protein Shew_1617 (215 aa).

This sequence belongs to the UPF0502 family.

In Shewanella loihica (strain ATCC BAA-1088 / PV-4), this protein is UPF0502 protein Shew_1617.